The sequence spans 221 residues: Ethylene-inducing xylanase 4 (221 aa).

The first 19 residues, 1–19, serve as a signal peptide directing secretion; sequence MVSFSTLLTACTAITGALG. The 191-residue stretch at 28-218 folds into the GH11 domain; the sequence is NVTPNAQGTH…SAGRASVVVE (191 aa). Asn96 carries N-linked (GlcNAc...) asparagine glycosylation. Glu114 acts as the Nucleophile in catalysis. The Proton donor role is filled by Glu205.

It belongs to the glycosyl hydrolase 11 (cellulase G) family.

It catalyses the reaction Endohydrolysis of (1-&gt;4)-beta-D-xylosidic linkages in xylans.. It functions in the pathway glycan degradation; xylan degradation. In terms of biological role, endo-1,4-beta-xylanase involved in the hydrolysis of xylan, a major structural heterogeneous polysaccharide found in plant biomass representing the second most abundant polysaccharide in the biosphere, after cellulose. May act as an elicitor of plant defense responses in certain plants but does not exhibit any cell death when transiently expressed in N.benthamiana. In Verticillium dahliae (strain VdLs.17 / ATCC MYA-4575 / FGSC 10137) (Verticillium wilt), this protein is Ethylene-inducing xylanase 4.